Consider the following 316-residue polypeptide: MTQAPPSPQAEGRKLLRLEARNSETPIERKPEWIKTRAKMGPEYQHLQNLVKSEGLHTVCQEAGCPNIYECWEDREATFLIGGEQCTRRCDFCQIDTGRPKPLDRDEPRRVAESVRTMGLRYATITGVTRDDLIDEGAWLYAETVRQIHELNPGIGVENLIPDFSGKPDLLAQVFESRPEVLAHNLETVPRIFKRIRPAFRYDRSLDVLTQARDFGLVTKSNLILGLGETREEVSQALRDLHAAGCELLTITQYLRPSPRHHPVERWVKPEEFVELKDEADEVGFTGVMSGPLVRSSYRAGRLYRQAVEAREGVTA.

[4Fe-4S] cluster contacts are provided by Cys60, Cys65, Cys71, Cys86, Cys90, Cys93, and Ser297. The Radical SAM core domain occupies 72-286 (WEDREATFLI…KDEADEVGFT (215 aa)).

It belongs to the radical SAM superfamily. Lipoyl synthase family. [4Fe-4S] cluster is required as a cofactor.

It localises to the cytoplasm. It carries out the reaction [[Fe-S] cluster scaffold protein carrying a second [4Fe-4S](2+) cluster] + N(6)-octanoyl-L-lysyl-[protein] + 2 oxidized [2Fe-2S]-[ferredoxin] + 2 S-adenosyl-L-methionine + 4 H(+) = [[Fe-S] cluster scaffold protein] + N(6)-[(R)-dihydrolipoyl]-L-lysyl-[protein] + 4 Fe(3+) + 2 hydrogen sulfide + 2 5'-deoxyadenosine + 2 L-methionine + 2 reduced [2Fe-2S]-[ferredoxin]. Its pathway is protein modification; protein lipoylation via endogenous pathway; protein N(6)-(lipoyl)lysine from octanoyl-[acyl-carrier-protein]: step 2/2. Functionally, catalyzes the radical-mediated insertion of two sulfur atoms into the C-6 and C-8 positions of the octanoyl moiety bound to the lipoyl domains of lipoate-dependent enzymes, thereby converting the octanoylated domains into lipoylated derivatives. The protein is Lipoyl synthase of Nocardioides sp. (strain ATCC BAA-499 / JS614).